A 342-amino-acid polypeptide reads, in one-letter code: GTP 3',8-cyclase (342 aa).

One can recognise a Radical SAM core domain in the interval 18–247 (GFSRRFYYLR…QLRGADDGPA (230 aa)). Arg27 is a GTP binding site. [4Fe-4S] cluster contacts are provided by Cys34 and Cys38. Tyr40 is a binding site for S-adenosyl-L-methionine. Residue Cys41 coordinates [4Fe-4S] cluster. Arg81 contacts GTP. Residue Gly85 participates in S-adenosyl-L-methionine binding. Residue Thr112 participates in GTP binding. Ser136 contributes to the S-adenosyl-L-methionine binding site. Lys173 is a GTP binding site. Met207 serves as a coordination point for S-adenosyl-L-methionine. Cys270 and Cys273 together coordinate [4Fe-4S] cluster. Position 275-277 (275-277 (RLR)) interacts with GTP. Cys287 is a binding site for [4Fe-4S] cluster.

The protein belongs to the radical SAM superfamily. MoaA family. Monomer and homodimer. [4Fe-4S] cluster is required as a cofactor.

The enzyme catalyses GTP + AH2 + S-adenosyl-L-methionine = (8S)-3',8-cyclo-7,8-dihydroguanosine 5'-triphosphate + 5'-deoxyadenosine + L-methionine + A + H(+). The protein operates within cofactor biosynthesis; molybdopterin biosynthesis. Its function is as follows. Catalyzes the cyclization of GTP to (8S)-3',8-cyclo-7,8-dihydroguanosine 5'-triphosphate. The protein is GTP 3',8-cyclase of Aeromonas hydrophila subsp. hydrophila (strain ATCC 7966 / DSM 30187 / BCRC 13018 / CCUG 14551 / JCM 1027 / KCTC 2358 / NCIMB 9240 / NCTC 8049).